Consider the following 774-residue polypeptide: Chondroitin sulfate synthase 2 (774 aa).

At M1–P15 the chain is on the cytoplasmic side. The chain crosses the membrane as a helical; Signal-anchor for type II membrane protein span at residues V16–V34. At E35 to T774 the chain is on the lumenal side. The interval P37–A103 is disordered. Over residues G54–P67 the composition is skewed to polar residues. N-linked (GlcNAc...) asparagine glycosylation is found at N138 and N361. D616 contributes to the a divalent metal cation binding site.

Belongs to the chondroitin N-acetylgalactosaminyltransferase family. In terms of assembly, interacts with PRKN. It depends on Mn(2+) as a cofactor. Co(2+) is required as a cofactor. Isoform 1, isoform 2 and isoform 3 are expressed in brain (at protein level).

Its subcellular location is the golgi apparatus. It is found in the golgi stack membrane. The protein resides in the cytoplasm. It localises to the cytosol. The protein localises to the mitochondrion. Its subcellular location is the mitochondrion matrix. The enzyme catalyses 3-O-(beta-D-GlcA-(1-&gt;3)-beta-D-GalNAc-(1-&gt;4)-beta-D-GlcA-(1-&gt;3)-beta-D-Gal-(1-&gt;3)-beta-D-Gal-(1-&gt;4)-beta-D-Xyl)-L-seryl-[protein] + UDP-N-acetyl-alpha-D-galactosamine = 3-O-(beta-D-GalNAc-(1-&gt;4)-beta-D-GlcA-(1-&gt;3)-beta-D-GalNAc-(1-&gt;4)-beta-D-GlcA-(1-&gt;3)-beta-D-Gal-(1-&gt;3)-beta-D-Gal-(1-&gt;4)-beta-D-Xyl)-L-seryl-[protein] + UDP + H(+). The catalysed reaction is 3-O-{beta-D-GlcA-(1-&gt;3)-[beta-D-GalNAc-(1-&gt;4)-beta-D-GlcA-(1-&gt;3)](n)-beta-D-GalNAc-(1-&gt;4)-beta-D-GlcA-(1-&gt;3)-beta-D-Gal-(1-&gt;3)-beta-D-Gal-(1-&gt;4)-beta-D-Xyl}-L-seryl-[protein] + UDP-N-acetyl-alpha-D-galactosamine = 3-O-{[beta-D-GalNAc-(1-&gt;4)-beta-D-GlcA-(1-&gt;3)](n+1)-beta-D-GalNAc-(1-&gt;4)-beta-D-GlcA-(1-&gt;3)-beta-D-Gal-(1-&gt;3)-beta-D-Gal-(1-&gt;4)-beta-D-Xyl}-L-seryl-[protein] + UDP + H(+). It catalyses the reaction 3-O-(beta-D-GalNAc-(1-&gt;4)-beta-D-GlcA-(1-&gt;3)-beta-D-Gal-(1-&gt;3)-beta-D-Gal-(1-&gt;4)-beta-D-Xyl)-L-seryl-[protein] + UDP-alpha-D-glucuronate = 3-O-(beta-D-GlcA-(1-&gt;3)-beta-D-GalNAc-(1-&gt;4)-beta-D-GlcA-(1-&gt;3)-beta-D-Gal-(1-&gt;3)-beta-D-Gal-(1-&gt;4)-beta-D-Xyl)-L-seryl-[protein] + UDP + H(+). It carries out the reaction 3-O-{[beta-D-GalNAc-(1-&gt;4)-beta-D-GlcA-(1-&gt;3)](n)-beta-D-GalNAc-(1-&gt;4)-beta-D-GlcA-(1-&gt;3)-beta-D-Gal-(1-&gt;3)-beta-D-Gal-(1-&gt;4)-beta-D-Xyl}-L-seryl-[protein] + UDP-alpha-D-glucuronate = 3-O-{beta-D-GlcA-(1-&gt;3)-[beta-D-GalNAc-(1-&gt;4)-beta-D-GlcA-(1-&gt;3)](n)-beta-D-GalNAc-(1-&gt;4)-beta-D-GlcA-(1-&gt;3)-beta-D-Gal-(1-&gt;3)-beta-D-Gal-(1-&gt;4)-beta-D-Xyl}-L-seryl-[protein] + UDP + H(+). In terms of biological role, has both beta-1,3-glucuronic acid and beta-1,4-N-acetylgalactosamine transferase activity. Transfers glucuronic acid (GlcUA) from UDP-GlcUA and N-acetylgalactosamine (GalNAc) from UDP-GalNAc to the non-reducing end of the elongating chondroitin polymer. Seems to act as a specific activating factor for CHSY1 in chondroitin polymerization. Functionally, may facilitate PRKN transport into the mitochondria. In collaboration with PRKN, may enhance cell viability and protect cells from oxidative stress. This chain is Chondroitin sulfate synthase 2, found in Mus musculus (Mouse).